Reading from the N-terminus, the 466-residue chain is Adenosylhomocysteinase (466 aa).

Thr57, Asp132, and Glu192 together coordinate substrate. 193 to 195 (TTT) contacts NAD(+). 2 residues coordinate substrate: Lys222 and Asp226. NAD(+) is bound by residues Asn227, 256 to 261 (GYGDVG), Glu279, Asn314, 335 to 337 (IGH), and Asn380.

The protein belongs to the adenosylhomocysteinase family. Requires NAD(+) as cofactor.

The protein resides in the cytoplasm. It catalyses the reaction S-adenosyl-L-homocysteine + H2O = L-homocysteine + adenosine. The protein operates within amino-acid biosynthesis; L-homocysteine biosynthesis; L-homocysteine from S-adenosyl-L-homocysteine: step 1/1. Functionally, may play a key role in the regulation of the intracellular concentration of adenosylhomocysteine. The protein is Adenosylhomocysteinase of Chromobacterium violaceum (strain ATCC 12472 / DSM 30191 / JCM 1249 / CCUG 213 / NBRC 12614 / NCIMB 9131 / NCTC 9757 / MK).